The primary structure comprises 256 residues: Deoxyribose-phosphate aldolase (256 aa).

Residue aspartate 102 is the Proton donor/acceptor of the active site. The Schiff-base intermediate with acetaldehyde role is filled by lysine 165. Catalysis depends on lysine 197, which acts as the Proton donor/acceptor.

It belongs to the DeoC/FbaB aldolase family. DeoC type 2 subfamily.

The protein resides in the cytoplasm. The enzyme catalyses 2-deoxy-D-ribose 5-phosphate = D-glyceraldehyde 3-phosphate + acetaldehyde. It functions in the pathway carbohydrate degradation; 2-deoxy-D-ribose 1-phosphate degradation; D-glyceraldehyde 3-phosphate and acetaldehyde from 2-deoxy-alpha-D-ribose 1-phosphate: step 2/2. Catalyzes a reversible aldol reaction between acetaldehyde and D-glyceraldehyde 3-phosphate to generate 2-deoxy-D-ribose 5-phosphate. The chain is Deoxyribose-phosphate aldolase from Shewanella sp. (strain W3-18-1).